We begin with the raw amino-acid sequence, 1370 residues long: DNA-directed RNA polymerase subunit beta (1370 aa).

It belongs to the RNA polymerase beta chain family. In terms of assembly, the RNAP catalytic core consists of 2 alpha, 1 beta, 1 beta' and 1 omega subunit. When a sigma factor is associated with the core the holoenzyme is formed, which can initiate transcription.

The catalysed reaction is RNA(n) + a ribonucleoside 5'-triphosphate = RNA(n+1) + diphosphate. In terms of biological role, DNA-dependent RNA polymerase catalyzes the transcription of DNA into RNA using the four ribonucleoside triphosphates as substrates. In Bordetella pertussis (strain Tohama I / ATCC BAA-589 / NCTC 13251), this protein is DNA-directed RNA polymerase subunit beta.